Here is a 255-residue protein sequence, read N- to C-terminus: Protein DAL82 (255 aa).

Positions 87–149 (PEHPRPRTKF…SQPLPLDSIT (63 aa)) are disordered. Basic and acidic residues predominate over residues 128–138 (PNNHSSDDEHS).

In terms of biological role, positive regulator of allophanate-induced genes in S.cerevisiae. The protein is Protein DAL82 (DAL82) of Saccharomyces cerevisiae (strain ATCC 204508 / S288c) (Baker's yeast).